Here is a 396-residue protein sequence, read N- to C-terminus: Tryptophan synthase beta chain (396 aa).

An N6-(pyridoxal phosphate)lysine modification is found at lysine 88.

The protein belongs to the TrpB family. In terms of assembly, tetramer of two alpha and two beta chains. Requires pyridoxal 5'-phosphate as cofactor.

The catalysed reaction is (1S,2R)-1-C-(indol-3-yl)glycerol 3-phosphate + L-serine = D-glyceraldehyde 3-phosphate + L-tryptophan + H2O. The protein operates within amino-acid biosynthesis; L-tryptophan biosynthesis; L-tryptophan from chorismate: step 5/5. The beta subunit is responsible for the synthesis of L-tryptophan from indole and L-serine. In Shewanella sp. (strain ANA-3), this protein is Tryptophan synthase beta chain.